The following is a 445-amino-acid chain: Mutanase Pc12g07500 (445 aa).

Positions 1 to 21 (MIWKSLFSALAILTHILPALT) are cleaved as a signal peptide. N-linked (GlcNAc...) asparagine glycans are attached at residues Asn386 and Asn437.

It belongs to the glycosyl hydrolase 71 family. Monomer.

It is found in the secreted. It carries out the reaction Endohydrolysis of (1-&gt;3)-alpha-D-glucosidic linkages in isolichenin, pseudonigeran and nigeran.. Hydrolyzes 1,3-alpha-glucan predominantly into pentasaccharides. May enhance the efficacy of fungal antibiotics by degrading bacterial exopolysaccharides. The chain is Mutanase Pc12g07500 from Penicillium rubens (strain ATCC 28089 / DSM 1075 / NRRL 1951 / Wisconsin 54-1255) (Penicillium chrysogenum).